We begin with the raw amino-acid sequence, 247 residues long: Ribonuclease 3 (247 aa).

The 129-residue stretch at 21-149 folds into the RNase III domain; sequence VDHQPLLDHL…LFGAIFRQHG (129 aa). Residue E62 participates in Mg(2+) binding. D66 is a catalytic residue. Mg(2+) contacts are provided by D135 and E138. Residue E138 is part of the active site. The 69-residue stretch at 176-244 folds into the DRBM domain; it reads DWKTTLQEEL…AHQAFRKLRE (69 aa).

Belongs to the ribonuclease III family. In terms of assembly, homodimer. It depends on Mg(2+) as a cofactor.

It localises to the cytoplasm. The catalysed reaction is Endonucleolytic cleavage to 5'-phosphomonoester.. In terms of biological role, digests double-stranded RNA. Involved in the processing of primary rRNA transcript to yield the immediate precursors to the large and small rRNAs (23S and 16S). Processes some mRNAs, and tRNAs when they are encoded in the rRNA operon. Processes pre-crRNA and tracrRNA of type II CRISPR loci if present in the organism. In Corynebacterium glutamicum (strain ATCC 13032 / DSM 20300 / JCM 1318 / BCRC 11384 / CCUG 27702 / LMG 3730 / NBRC 12168 / NCIMB 10025 / NRRL B-2784 / 534), this protein is Ribonuclease 3.